A 712-amino-acid polypeptide reads, in one-letter code: Glycine--tRNA ligase beta subunit (712 aa).

It belongs to the class-II aminoacyl-tRNA synthetase family. In terms of assembly, tetramer of two alpha and two beta subunits.

It localises to the cytoplasm. It carries out the reaction tRNA(Gly) + glycine + ATP = glycyl-tRNA(Gly) + AMP + diphosphate. The sequence is that of Glycine--tRNA ligase beta subunit from Acaryochloris marina (strain MBIC 11017).